A 285-amino-acid polypeptide reads, in one-letter code: Shikimate dehydrogenase (NADP(+)) (285 aa).

Shikimate-binding positions include 20-22 (SRS) and T67. The Proton acceptor role is filled by K71. Shikimate-binding residues include N93 and D108. Residues 132–136 (GAGGA) and M224 each bind NADP(+). Y226 lines the shikimate pocket. Position 248 (G248) interacts with NADP(+).

This sequence belongs to the shikimate dehydrogenase family. As to quaternary structure, homodimer.

It carries out the reaction shikimate + NADP(+) = 3-dehydroshikimate + NADPH + H(+). The protein operates within metabolic intermediate biosynthesis; chorismate biosynthesis; chorismate from D-erythrose 4-phosphate and phosphoenolpyruvate: step 4/7. In terms of biological role, involved in the biosynthesis of the chorismate, which leads to the biosynthesis of aromatic amino acids. Catalyzes the reversible NADPH linked reduction of 3-dehydroshikimate (DHSA) to yield shikimate (SA). This Bordetella avium (strain 197N) protein is Shikimate dehydrogenase (NADP(+)).